The primary structure comprises 470 residues: ATP synthase subunit beta (470 aa).

158–165 (GGAGVGKT) is a binding site for ATP.

This sequence belongs to the ATPase alpha/beta chains family. F-type ATPases have 2 components, CF(1) - the catalytic core - and CF(0) - the membrane proton channel. CF(1) has five subunits: alpha(3), beta(3), gamma(1), delta(1), epsilon(1). CF(0) has three main subunits: a(1), b(2) and c(9-12). The alpha and beta chains form an alternating ring which encloses part of the gamma chain. CF(1) is attached to CF(0) by a central stalk formed by the gamma and epsilon chains, while a peripheral stalk is formed by the delta and b chains.

Its subcellular location is the cell membrane. It carries out the reaction ATP + H2O + 4 H(+)(in) = ADP + phosphate + 5 H(+)(out). Functionally, produces ATP from ADP in the presence of a proton gradient across the membrane. The catalytic sites are hosted primarily by the beta subunits. The chain is ATP synthase subunit beta from Halalkalibacterium halodurans (strain ATCC BAA-125 / DSM 18197 / FERM 7344 / JCM 9153 / C-125) (Bacillus halodurans).